The chain runs to 216 residues: Peroxiredoxin (216 aa).

The region spanning 2-158 (VVIGEKFPEV…ILRLVKALKI (157 aa)) is the Thioredoxin domain. C46 functions as the Cysteine sulfenic acid (-SOH) intermediate in the catalytic mechanism. Residue R121 coordinates substrate. The cysteines at positions 205 and 211 are disulfide-linked.

This sequence belongs to the peroxiredoxin family. Prx6 subfamily. As to quaternary structure, homodecamer. Pentamer of dimers that assemble into a ring structure.

Its subcellular location is the cytoplasm. It carries out the reaction a hydroperoxide + [thioredoxin]-dithiol = an alcohol + [thioredoxin]-disulfide + H2O. Thiol-specific peroxidase that catalyzes the reduction of hydrogen peroxide and organic hydroperoxides to water and alcohols, respectively. Plays a role in cell protection against oxidative stress by detoxifying peroxides. The polypeptide is Peroxiredoxin (ahpC) (Pyrococcus horikoshii (strain ATCC 700860 / DSM 12428 / JCM 9974 / NBRC 100139 / OT-3)).